Reading from the N-terminus, the 283-residue chain is Pantothenate synthetase (283 aa).

30–37 lines the ATP pocket; that stretch reads MGTLHDGH. The active-site Proton donor is the H37. Q61 provides a ligand contact to (R)-pantoate. A beta-alanine-binding site is contributed by Q61. Residue 148 to 151 coordinates ATP; it reads GLKD. Residue Q154 participates in (R)-pantoate binding. 185 to 188 contacts ATP; the sequence is MSSR.

This sequence belongs to the pantothenate synthetase family. In terms of assembly, homodimer.

It is found in the cytoplasm. The catalysed reaction is (R)-pantoate + beta-alanine + ATP = (R)-pantothenate + AMP + diphosphate + H(+). The protein operates within cofactor biosynthesis; (R)-pantothenate biosynthesis; (R)-pantothenate from (R)-pantoate and beta-alanine: step 1/1. Catalyzes the condensation of pantoate with beta-alanine in an ATP-dependent reaction via a pantoyl-adenylate intermediate. This Leptospira biflexa serovar Patoc (strain Patoc 1 / Ames) protein is Pantothenate synthetase.